We begin with the raw amino-acid sequence, 348 residues long: Thioesterase-like protein TwmA (348 aa).

It functions in the pathway secondary metabolite biosynthesis. In terms of biological role, thioesterase-like protein; part of the gene cluster that mediates the biosynthesis of wortmanamides A and B, reduced long-chain polyketides amidated with a specific omega-amino acid, 5-aminopentanoic acid (5PA). The PKS modules of TwmB are involved in the synthesis of the polyketide backbone, whereas the non-canonical C domain of TwmB is a bonafide condensation domain that specifically selects 5PA and catalyzes amidation to release polyketide chain. The C domain clearly prefers C16 and C18 fatty acyl substrates, which is consistent with simultaneous formation of both octaketide and nonaketide acyl amides wortmanamides A and B. Because TwmB lacks a designated enoylreductase (ER) domain, the required activity is provided the enoyl reductase TwmE. The roles of the remaining enzymes have still to be clarified. The protein is Thioesterase-like protein TwmA of Talaromyces wortmannii (Penicillium wortmannii).